The sequence spans 435 residues: Metacaspase-1A (435 aa).

Disordered stretches follow at residues 1–46 and 106–129; these read MQNH…APPP and YQNP…VAFG. The span at 36–46 shows a compositional bias: pro residues; the sequence is SPQPGYGAPPP. Active-site residues include His-231 and Cys-287.

Belongs to the peptidase C14B family.

Involved in cell death (apoptosis). This is Metacaspase-1A (casA) from Neosartorya fischeri (strain ATCC 1020 / DSM 3700 / CBS 544.65 / FGSC A1164 / JCM 1740 / NRRL 181 / WB 181) (Aspergillus fischerianus).